We begin with the raw amino-acid sequence, 450 residues long: Phosphoglucosamine mutase (450 aa).

The active-site Phosphoserine intermediate is the S102. Mg(2+) contacts are provided by S102, D244, D246, and D248. At S102 the chain carries Phosphoserine.

The protein belongs to the phosphohexose mutase family. Requires Mg(2+) as cofactor. In terms of processing, activated by phosphorylation.

It carries out the reaction alpha-D-glucosamine 1-phosphate = D-glucosamine 6-phosphate. Functionally, catalyzes the conversion of glucosamine-6-phosphate to glucosamine-1-phosphate. This Bartonella bacilliformis (strain ATCC 35685 / KC583 / Herrer 020/F12,63) protein is Phosphoglucosamine mutase.